The primary structure comprises 383 residues: ATP phosphoribosyltransferase regulatory subunit (383 aa).

Belongs to the class-II aminoacyl-tRNA synthetase family. HisZ subfamily. As to quaternary structure, heteromultimer composed of HisG and HisZ subunits.

The protein localises to the cytoplasm. It participates in amino-acid biosynthesis; L-histidine biosynthesis; L-histidine from 5-phospho-alpha-D-ribose 1-diphosphate: step 1/9. In terms of biological role, required for the first step of histidine biosynthesis. May allow the feedback regulation of ATP phosphoribosyltransferase activity by histidine. The protein is ATP phosphoribosyltransferase regulatory subunit of Desulfitobacterium hafniense (strain DSM 10664 / DCB-2).